A 321-amino-acid chain; its full sequence is Arginine-hydroxylase NDUFAF5, mitochondrial (321 aa).

A mitochondrion-targeting transit peptide spans 1-25; it reads MNVSVKSLRGVSRTWRSFSSRQGMN.

It belongs to the methyltransferase superfamily. As to quaternary structure, interacts with NDUFS7.

The protein resides in the mitochondrion inner membrane. Arginine hydroxylase that mediates hydroxylation of 'Arg-111' of NDUFS7 and is involved in the assembly of mitochondrial NADH:ubiquinone oxidoreductase complex (complex I, MT-ND1) at early stages. May also have methyltransferase activity. This chain is Arginine-hydroxylase NDUFAF5, mitochondrial, found in Danio rerio (Zebrafish).